The primary structure comprises 600 residues: MIEVLLVTICLAVFPYQGSSIILESGNVNDYEVVYPRKVTAVPKGAVQQKYEDAMQYEFKVNGEPVVLHLEKNKELFSEDYSETHYSPDGREITTYPSVEDHCYYHGRIQNEADSTASISACNGLKGHFKLQGETYLIEPLKLPDSEAHAVFKYENVEKEEEAPKMCGVTETNWKSDEPIKKASQLVVTAEQQRFPRRYVKLAIVADHRMYTKHKKNLKPWVFQMVNSVHQIYRSMNVLIALVYLNIWKKNDKITAQSASNVTLDLFGNWRETVLLKRKRHDCAQLLTAIDFDGPTIGRAHVSSVCDPKRSTGIVQNYTEINLVNAVIMAHELGHNLGMDHDGNQCNCHACIMSAVINNPPSERFSGCSMGYYQTFLTAYNPQCILNALSKRDIITPPVCGNELLEEGEECDCGSPENCQYQCCNATTCKLHSWVECESGECCEQCRFKKAGAVCRAARTECDIPENCTDQSADCPTDSFHRNGQPCLYNHGYCYNGNCPVMHYQCYGLFGPNATVGQDGCFDANDRGDEYFYCRKENEKYIPCAQEDVKCGRLFCTYIYDINLCRYDYSANGMVAQGTKCADGKVCNSNRQCADVNTAY.

Residues 1–20 (MIEVLLVTICLAVFPYQGSS) form the signal peptide. Residues 21–191 (IILESGNVND…KASQLVVTAE (171 aa)) constitute a propeptide that is removed on maturation. The residue at position 192 (Q192) is a Pyrrolidone carboxylic acid. Residues 198-389 (RYVKLAIVAD…YNPQCILNAL (192 aa)) form the Peptidase M12B domain. N-linked (GlcNAc...) asparagine glycans are attached at residues N261 and N317. Cystine bridges form between C306-C384, C346-C368, and C348-C351. H331 provides a ligand contact to Zn(2+). E332 is an active-site residue. H335 and H341 together coordinate Zn(2+). Residues 397–483 (PPVCGNELLE…DCPTDSFHRN (87 aa)) enclose the Disintegrin domain. 6 residues coordinate Ca(2+): V399, N402, L404, E406, E409, and D412. Cystine bridges form between C400–C429, C411–C424, C413–C419, C423–C446, C437–C443, C442–C468, C455–C475, C462–C494, C487–C499, C506–C556, C521–C565, C534–C544, C551–C587, and C581–C593. Residue N425 is glycosylated (N-linked (GlcNAc...) asparagine). Positions 461-463 (ECD) match the D/ECD-tripeptide motif. N-linked (GlcNAc...) asparagine glycosylation is present at N467. A glycan (N-linked (GlcNAc...) asparagine) is linked at N513.

It belongs to the venom metalloproteinase (M12B) family. P-III subfamily. P-IIIa sub-subfamily. In terms of assembly, monomer. Requires Zn(2+) as cofactor. In terms of tissue distribution, expressed by the venom gland.

The protein resides in the secreted. This metalloproteinase-disintegrin-like impairs hemostasis in the envenomed animal. This Trimeresurus stejnegeri (Chinese green tree viper) protein is Zinc metalloproteinase-disintegrin-like stejnihagin-B.